Here is a 222-residue protein sequence, read N- to C-terminus: tRNA (guanine-N(1)-)-methyltransferase (222 aa).

S-adenosyl-L-methionine-binding positions include G111 and 131 to 136 (LGNYVI).

Belongs to the RNA methyltransferase TrmD family. Homodimer.

Its subcellular location is the cytoplasm. It carries out the reaction guanosine(37) in tRNA + S-adenosyl-L-methionine = N(1)-methylguanosine(37) in tRNA + S-adenosyl-L-homocysteine + H(+). Its function is as follows. Specifically methylates guanosine-37 in various tRNAs. This Leptospira borgpetersenii serovar Hardjo-bovis (strain JB197) protein is tRNA (guanine-N(1)-)-methyltransferase.